Reading from the N-terminus, the 140-residue chain is Putative ABC transporter permease protein ORF1 (140 aa).

In terms of domain architecture, ABC transmembrane type-1 spans 1 to 133; the sequence is DPNVAFYSVV…ITTAGIFAYF (133 aa). 3 helical membrane passes run 9–29, 65–85, and 115–135; these read VVAV…IAAL, TACI…YVMT, and TIAS…YFVT.

It belongs to the binding-protein-dependent transport system permease family. MalFG subfamily.

It is found in the cell membrane. Its function is as follows. May play a role in sugar transport. The chain is Putative ABC transporter permease protein ORF1 from Caldicellulosiruptor sp. (strain Rt8B.4).